We begin with the raw amino-acid sequence, 283 residues long: Protein/nucleic acid deglycase HchA (283 aa).

H86, E91, and H123 together coordinate Zn(2+). C185 serves as the catalytic Nucleophile.

This sequence belongs to the peptidase C56 family. HchA subfamily. As to quaternary structure, homodimer.

Its subcellular location is the cytoplasm. It carries out the reaction N(omega)-(1-hydroxy-2-oxopropyl)-L-arginyl-[protein] + H2O = lactate + L-arginyl-[protein] + H(+). The catalysed reaction is N(6)-(1-hydroxy-2-oxopropyl)-L-lysyl-[protein] + H2O = lactate + L-lysyl-[protein] + H(+). The enzyme catalyses S-(1-hydroxy-2-oxopropyl)-L-cysteinyl-[protein] + H2O = lactate + L-cysteinyl-[protein] + H(+). It catalyses the reaction N(omega)-(1-hydroxy-2-oxoethyl)-L-arginyl-[protein] + H2O = L-arginyl-[protein] + glycolate + H(+). It carries out the reaction N(6)-(1-hydroxy-2-oxoethyl)-L-lysyl-[protein] + H2O = glycolate + L-lysyl-[protein] + H(+). The catalysed reaction is S-(1-hydroxy-2-oxoethyl)-L-cysteinyl-[protein] + H2O = glycolate + L-cysteinyl-[protein] + H(+). The enzyme catalyses N(2)-(1-hydroxy-2-oxopropyl)-dGTP + H2O = lactate + dGTP + H(+). It catalyses the reaction N(2)-(1-hydroxy-2-oxopropyl)-GTP + H2O = lactate + GTP + H(+). It carries out the reaction N(2)-(1-hydroxy-2-oxopropyl)-GDP + H2O = lactate + GDP + H(+). The catalysed reaction is N(2)-(1-hydroxy-2-oxopropyl)-GMP + H2O = lactate + GMP + H(+). The enzyme catalyses N(2)-(1-hydroxy-2-oxoethyl)-dGTP + H2O = dGTP + glycolate + H(+). It catalyses the reaction N(2)-(1-hydroxy-2-oxoethyl)-GTP + H2O = glycolate + GTP + H(+). It carries out the reaction N(2)-(1-hydroxy-2-oxoethyl)-GDP + H2O = glycolate + GDP + H(+). The catalysed reaction is N(2)-(1-hydroxy-2-oxoethyl)-GMP + H2O = glycolate + GMP + H(+). The enzyme catalyses an N(2)-(1-hydroxy-2-oxopropyl)-guanosine in RNA + H2O = a guanosine in RNA + lactate + H(+). It catalyses the reaction an N(2)-(1-hydroxy-2-oxopropyl)-2'-deoxyguanosine in DNA + H2O = a 2'-deoxyguanosine in DNA + lactate + H(+). It carries out the reaction an N(2)-(1-hydroxy-2-oxoethyl)-guanosine in RNA + H2O = a guanosine in RNA + glycolate + H(+). The catalysed reaction is an N(2)-(1-hydroxy-2-oxoethyl)-2'-deoxyguanosine in DNA + H2O = a 2'-deoxyguanosine in DNA + glycolate + H(+). Protein and nucleotide deglycase that catalyzes the deglycation of the Maillard adducts formed between amino groups of proteins or nucleotides and reactive carbonyl groups of glyoxals. Thus, functions as a protein deglycase that repairs methylglyoxal- and glyoxal-glycated proteins, and releases repaired proteins and lactate or glycolate, respectively. Deglycates cysteine, arginine and lysine residues in proteins, and thus reactivates these proteins by reversing glycation by glyoxals. Acts on early glycation intermediates (hemithioacetals and aminocarbinols), preventing the formation of Schiff bases and advanced glycation endproducts (AGE). Also functions as a nucleotide deglycase able to repair glycated guanine in the free nucleotide pool (GTP, GDP, GMP, dGTP) and in DNA and RNA. Is thus involved in a major nucleotide repair system named guanine glycation repair (GG repair), dedicated to reversing methylglyoxal and glyoxal damage via nucleotide sanitization and direct nucleic acid repair. Plays an important role in protecting cells from carbonyl stress. The sequence is that of Protein/nucleic acid deglycase HchA from Shigella flexneri.